A 203-amino-acid chain; its full sequence is Somatotropin (203 aa).

The signal sequence occupies residues 1-17 (MDRVVLMLSVLSLGVSS). Pyrrolidone carboxylic acid is present on Q18. Residue H36 coordinates Zn(2+). C68 and C176 form a disulfide bridge. E185 provides a ligand contact to Zn(2+). Cysteines 193 and 201 form a disulfide.

This sequence belongs to the somatotropin/prolactin family.

The protein localises to the secreted. Functionally, growth hormone plays an important role in growth control and is involved in the regulation of several anabolic processes. Implicated as an osmoregulatory substance important for seawater adaptation. The sequence is that of Somatotropin (gh) from Pagrus major (Red sea bream).